The following is a 440-amino-acid chain: Tryptophan synthase beta chain (440 aa).

Residue Lys110 is modified to N6-(pyridoxal phosphate)lysine.

This sequence belongs to the TrpB family. In terms of assembly, tetramer of two alpha and two beta chains. It depends on pyridoxal 5'-phosphate as a cofactor.

The catalysed reaction is (1S,2R)-1-C-(indol-3-yl)glycerol 3-phosphate + L-serine = D-glyceraldehyde 3-phosphate + L-tryptophan + H2O. Its pathway is amino-acid biosynthesis; L-tryptophan biosynthesis; L-tryptophan from chorismate: step 5/5. Functionally, the beta subunit is responsible for the synthesis of L-tryptophan from indole and L-serine. The polypeptide is Tryptophan synthase beta chain (Thermococcus gammatolerans (strain DSM 15229 / JCM 11827 / EJ3)).